The sequence spans 88 residues: Defensin-like protein 24 (88 aa).

A signal peptide spans Met-1–Ala-23. Intrachain disulfides connect Cys-37/Cys-87, Cys-47/Cys-72, Cys-56/Cys-83, and Cys-60/Cys-85.

This sequence belongs to the DEFL family.

The protein localises to the secreted. This is Defensin-like protein 24 from Arabidopsis thaliana (Mouse-ear cress).